The primary structure comprises 205 residues: Cerebellin-3 (205 aa).

The N-terminal stretch at 1–32 (MLGAKPHWLPGPLHSPGLPLVLVLLALGAGWA) is a signal peptide. The region spanning 67–205 (APPGRVAFAA…SFSGFLIFPL (139 aa)) is the C1q domain. The interval 72-205 (VAFAAVRSHH…SFSGFLIFPL (134 aa)) is necessary for interaction with CBLN3, and homotrimerization. Asparagine 90 carries an N-linked (GlcNAc...) asparagine glycan.

As to quaternary structure, heterohexamer; disulfide-linked heterotrimers. Interacts with CBLN1. May also form oligomers with CBLN2 and CBLN4.

Its subcellular location is the endoplasmic reticulum. The protein localises to the golgi apparatus. It is found in the cis-Golgi network. It localises to the secreted. The protein resides in the synapse. Its function is as follows. May be involved in synaptic functions in the CNS. This chain is Cerebellin-3 (CBLN3), found in Homo sapiens (Human).